Here is a 445-residue protein sequence, read N- to C-terminus: Exodeoxyribonuclease 7 large subunit (445 aa).

Belongs to the XseA family. Heterooligomer composed of large and small subunits.

The protein resides in the cytoplasm. It catalyses the reaction Exonucleolytic cleavage in either 5'- to 3'- or 3'- to 5'-direction to yield nucleoside 5'-phosphates.. Functionally, bidirectionally degrades single-stranded DNA into large acid-insoluble oligonucleotides, which are then degraded further into small acid-soluble oligonucleotides. This is Exodeoxyribonuclease 7 large subunit from Staphylococcus epidermidis (strain ATCC 35984 / DSM 28319 / BCRC 17069 / CCUG 31568 / BM 3577 / RP62A).